The primary structure comprises 156 residues: SCP2 sterol-binding domain-containing protein 1 (156 aa).

The 113-residue stretch at 44-156 (SFPVFQDIRL…ERVFKDWAKF (113 aa)) folds into the SCP2 domain.

The sequence is that of SCP2 sterol-binding domain-containing protein 1 (SCP2D1) from Homo sapiens (Human).